Consider the following 301-residue polypeptide: Peptidyl-prolyl isomerase CWC27 (301 aa).

The PPIase cyclophilin-type domain maps to 9–159 (TTAKCILYTT…YPAVLKDVEI (151 aa)). A disordered region spans residues 251–280 (TELHDNVDEATTKETESQENIKEEPMDKRE).

This sequence belongs to the cyclophilin-type PPIase family. CWC27 subfamily. In terms of assembly, belongs to the CWC complex (or CEF1-associated complex), a spliceosome subcomplex composed of the U2, U5 and U6 snRNAs and at least BUD13, BUD31, BRR2, CDC40, CEF1, CLF1, CUS1, CWC2, CWC15, CWC21, CWC22, CWC23, CWC24, CWC25, CWC27, ECM2, HSH155, IST3, ISY1, LEA1, MSL1, NTC20, PRP8, PRP9, PRP11, PRP19, PRP21, PRP22, PRP45, PRP46, SLU7, SMB1, SMD1, SMD2, SMD3, SMX2, SMX3, SNT309, SNU114, SPP2, SYF1, SYF2, RSE1 and YJU2.

It localises to the cytoplasm. It is found in the nucleus. The enzyme catalyses [protein]-peptidylproline (omega=180) = [protein]-peptidylproline (omega=0). In terms of biological role, PPIases accelerate the folding of proteins. Catalyzes the cis-trans isomerization of proline imidic peptide bonds in oligopeptides. Involved in pre-mRNA splicing. This Saccharomyces cerevisiae (strain ATCC 204508 / S288c) (Baker's yeast) protein is Peptidyl-prolyl isomerase CWC27 (CWC27).